An 89-amino-acid chain; its full sequence is Small ribosomal subunit protein uS15 (89 aa).

Residues methionine 1–aspartate 21 are compositionally biased toward basic and acidic residues. The segment at methionine 1 to glutamate 26 is disordered.

The protein belongs to the universal ribosomal protein uS15 family. As to quaternary structure, part of the 30S ribosomal subunit. Forms a bridge to the 50S subunit in the 70S ribosome, contacting the 23S rRNA.

In terms of biological role, one of the primary rRNA binding proteins, it binds directly to 16S rRNA where it helps nucleate assembly of the platform of the 30S subunit by binding and bridging several RNA helices of the 16S rRNA. Forms an intersubunit bridge (bridge B4) with the 23S rRNA of the 50S subunit in the ribosome. This is Small ribosomal subunit protein uS15 from Erythrobacter litoralis (strain HTCC2594).